Consider the following 91-residue polypeptide: Alpha-defensin-related sequence 10 (91 aa).

The signal sequence occupies residues 1–19; it reads MKKLVLLSAFVLLAFQVQA. Positions 20–65 are excised as a propeptide; sequence DSIQNTDEETKTEEQPGEENQAMSVSFGDPEGSALQDAAVGMARPC. The disordered stretch occupies residues 21 to 52; sequence SIQNTDEETKTEEQPGEENQAMSVSFGDPEGS. 7 consecutive repeat copies span residues 65-67, 68-70, 71-73, 74-76, 77-79, 80-82, and 83-85. The tract at residues 65–85 is 7 X 3 AA tandem repeats of C-P-X; that stretch reads CPPCPSCPSCPWCPMCPRCPS.

This sequence belongs to the alpha-defensin family. In terms of tissue distribution, paneth cells of the small bowel.

The protein resides in the secreted. Functionally, apparent precursor of a secreted, cationic, proline- and cysteine-rich peptide that contains Cys-Pro-Xaa repeats. Unlike cryptdin, the proposed mature peptide region lacks the structural motif characteristic of defensins. It may have microbicidal activities. The sequence is that of Alpha-defensin-related sequence 10 (Defa-rs10) from Mus musculus (Mouse).